Reading from the N-terminus, the 300-residue chain is MQVTSQFKTVALVGRNNTPGIAEPLTALASCIAKRGFEVVFEADTAAEIGVTDYPALRPAEIGARADVAVVLGGDGTMLGIGRQLAPYRTPLIGINHGRLGFITDIPISDMREIVPQMLSGNFEREERVLLEARIMRGGNPIYHALAFNDVVVNRSGFSGMAELHVSVDGRFMYNQRSDGLIVATPTGSTAYALSSQGPILHPQLQGIVLVPIAPHALSNRPIVLPDDSKVSIQIVSGREVNVNFDMQSFTSLELGDTIEVRRSRHTVPMLHPVGYSFFTTLRKKLHWNEYPSHEEDSKP.

Aspartate 75 functions as the Proton acceptor in the catalytic mechanism. Residues 75-76, 149-150, arginine 177, aspartate 179, 190-195, alanine 214, and glutamine 248 contribute to the NAD(+) site; these read DG, ND, and TAYALS.

Belongs to the NAD kinase family. A divalent metal cation is required as a cofactor.

It localises to the cytoplasm. The catalysed reaction is NAD(+) + ATP = ADP + NADP(+) + H(+). Functionally, involved in the regulation of the intracellular balance of NAD and NADP, and is a key enzyme in the biosynthesis of NADP. Catalyzes specifically the phosphorylation on 2'-hydroxyl of the adenosine moiety of NAD to yield NADP. The sequence is that of NAD kinase from Paraburkholderia phytofirmans (strain DSM 17436 / LMG 22146 / PsJN) (Burkholderia phytofirmans).